The following is a 203-amino-acid chain: 2-phospho-L-lactate guanylyltransferase (203 aa).

Belongs to the CofC family. As to quaternary structure, homodimer.

It catalyses the reaction (2S)-2-phospholactate + GTP + H(+) = (2S)-lactyl-2-diphospho-5'-guanosine + diphosphate. Its pathway is cofactor biosynthesis; coenzyme F420 biosynthesis. Its function is as follows. Guanylyltransferase that catalyzes the activation of (2S)-2-phospholactate (2-PL) as (2S)-lactyl-2-diphospho-5'-guanosine, via the condensation of 2-PL with GTP. It is involved in the biosynthesis of coenzyme F420, a hydride carrier cofactor. The sequence is that of 2-phospho-L-lactate guanylyltransferase from Halomicrobium mukohataei (strain ATCC 700874 / DSM 12286 / JCM 9738 / NCIMB 13541) (Haloarcula mukohataei).